Consider the following 545-residue polypeptide: MMGHRPVLVLSQNTKRESGRKVQSGNINAAKTIADIIRTCLGPKSMMKMLLDPMGGIVMTNDGNAILREIQVQHPAAKSMIEISRTQDEEVGDGTTSVIILAGEMLSVAEHFLEQQMHPTVVISAYRMALDDMISTLKKISTPVDVNNREMMLSIINSSITTKVISRWSSLACNIALDAVKTVQFEENGRKEIDIKKYARVEKIPGGIIEDSCVLRGVMINKDVTHPRMRRYIKNPRIVLLDSSLEYKKGESQTDIEITREEDFTRILQMEEEYIHQLCEDIIQLKPDVVITEKGISDLAQHYLMRANVTAIRRVRKTDNNRIARACGARIVSRPEELREDDVGTGAGLLEIKKIGDEYFTFITDCKDPKACTILLRGASKEILSEVERNLQDAMQVCRNVLLDPQLVPGGGASEMAVAHALTEKSKAMTGVEQWPYRAVAQALEVIPRTLIQNCGASTIRLLTSLRAKHTQESCETWGVNGETGTLVDMKELGIWEPLAVKLQTYKTAVETAVLLLRIDDIVSGHKKKGDDQNRQTGAPDAGQE.

Met1 carries the N-acetylmethionine modification. The disordered stretch occupies residues 1 to 24 (MMGHRPVLVLSQNTKRESGRKVQS). Phosphoserine is present on Ser11. Lys15 is covalently cross-linked (Glycyl lysine isopeptide (Lys-Gly) (interchain with G-Cter in SUMO2)). Gly42 provides a ligand contact to ADP. Gly42 is a binding site for ATP. Asp93 is a binding site for Mg(2+). Residues Gly94, Thr95, Thr96, Ser97, Thr162, and Lys163 each coordinate ADP. The ATP site is built by Gly94, Thr95, and Thr96. A Phosphoserine modification is found at Ser170. Lys222 is subject to N6-acetyllysine. A phosphoserine mark is found at Ser243 and Ser244. A Phosphotyrosine modification is found at Tyr247. Residues Lys248 and Lys249 each participate in a glycyl lysine isopeptide (Lys-Gly) (interchain with G-Cter in SUMO2) cross-link. Ser252 carries the post-translational modification Phosphoserine. Residues Cys366 and Cys372 are joined by a disulfide bond. Lys381 participates in a covalent cross-link: Glycyl lysine isopeptide (Lys-Gly) (interchain with G-Cter in SUMO2). Gly411 contributes to the ADP binding site. An ATP-binding site is contributed by Gly411. Thr430 and Thr459 each carry phosphothreonine. Residues Gly482, Glu483, Glu497, and Lys502 each contribute to the ADP site. ATP is bound at residue Gly482. Residue Glu497 coordinates ATP. The disordered stretch occupies residues 526–545 (HKKKGDDQNRQTGAPDAGQE).

This sequence belongs to the TCP-1 chaperonin family. Component of the chaperonin-containing T-complex (TRiC), a hexadecamer composed of two identical back-to-back stacked rings enclosing a protein folding chamber. Each ring is made up of eight different subunits: TCP1/CCT1, CCT2, CCT3, CCT4, CCT5, CCT6A/CCT6, CCT7, CCT8. Interacts with PACRG. Interacts with DNAAF4. Interacts with DLEC1. In terms of processing, the N-terminus is blocked.

It is found in the cytoplasm. The catalysed reaction is ATP + H2O = ADP + phosphate + H(+). Functionally, component of the chaperonin-containing T-complex (TRiC), a molecular chaperone complex that assists the folding of actin, tubulin and other proteins upon ATP hydrolysis. The TRiC complex mediates the folding of WRAP53/TCAB1, thereby regulating telomere maintenance. As part of the TRiC complex may play a role in the assembly of BBSome, a complex involved in ciliogenesis regulating transports vesicles to the cilia. This Mus musculus (Mouse) protein is T-complex protein 1 subunit gamma (Cct3).